The following is a 387-amino-acid chain: 8-amino-7-oxononanoate synthase (387 aa).

Arg-20 contributes to the substrate binding site. 107 to 108 (GY) serves as a coordination point for pyridoxal 5'-phosphate. Position 132 (His-132) interacts with substrate. Residues Ser-181, His-209, and Thr-238 each coordinate pyridoxal 5'-phosphate. Lys-241 carries the post-translational modification N6-(pyridoxal phosphate)lysine. Substrate is bound at residue Thr-355.

The protein belongs to the class-II pyridoxal-phosphate-dependent aminotransferase family. BioF subfamily. As to quaternary structure, homodimer. Requires pyridoxal 5'-phosphate as cofactor.

It catalyses the reaction 6-carboxyhexanoyl-[ACP] + L-alanine + H(+) = (8S)-8-amino-7-oxononanoate + holo-[ACP] + CO2. It participates in cofactor biosynthesis; biotin biosynthesis. Catalyzes the decarboxylative condensation of pimeloyl-[acyl-carrier protein] and L-alanine to produce 8-amino-7-oxononanoate (AON), [acyl-carrier protein], and carbon dioxide. The protein is 8-amino-7-oxononanoate synthase of Dechloromonas aromatica (strain RCB).